A 430-amino-acid polypeptide reads, in one-letter code: Adenylosuccinate synthetase (430 aa).

GTP is bound by residues Gly-12 to Lys-18 and Gly-40 to Thr-42. The Proton acceptor role is filled by Asp-13. Positions 13 and 40 each coordinate Mg(2+). IMP-binding positions include Asp-13–Lys-16, Asn-38–His-41, Thr-128, Arg-142, Gln-223, Thr-238, and Arg-302. The Proton donor role is filled by His-41. Thr-298–Arg-304 contacts substrate. GTP-binding positions include Arg-304, Leu-330–Asp-332, and Ser-412–Gly-414.

It belongs to the adenylosuccinate synthetase family. Homodimer. Mg(2+) serves as cofactor.

Its subcellular location is the cytoplasm. The enzyme catalyses IMP + L-aspartate + GTP = N(6)-(1,2-dicarboxyethyl)-AMP + GDP + phosphate + 2 H(+). It functions in the pathway purine metabolism; AMP biosynthesis via de novo pathway; AMP from IMP: step 1/2. Functionally, plays an important role in the de novo pathway of purine nucleotide biosynthesis. Catalyzes the first committed step in the biosynthesis of AMP from IMP. The chain is Adenylosuccinate synthetase from Listeria welshimeri serovar 6b (strain ATCC 35897 / DSM 20650 / CCUG 15529 / CIP 8149 / NCTC 11857 / SLCC 5334 / V8).